Consider the following 110-residue polypeptide: MASFFLSSLVLFLAALILVPQGLAQYHLNPVYEPPVNGPPVNKPPQKETPVHKPPQKETPVHKPPQKEPPRHKPPQKEPPRHKPPHKKSHLHVTKPSYGKHPTEEHNIHF.

The signal sequence occupies residues 1–24; sequence MASFFLSSLVLFLAALILVPQGLA. Positions 31 to 110 are disordered; it reads VYEPPVNGPP…HPTEEHNIHF (80 aa). Positions 32 to 43 are enriched in pro residues; that stretch reads YEPPVNGPPVNK. 3 tandem repeats follow at residues 34–38, 39–43, and 44–48. The tract at residues 34-88 is 11 X 5 AA approximate tandem repeats of P-P-[VQRH]-[NKH]-[GKE]; that stretch reads PPVNGPPVNKPPQKETPVHKPPQKETPVHKPPQKEPPRHKPPQKEPPRHKPPHKK. The span at 45–81 shows a compositional bias: basic and acidic residues; sequence PQKETPVHKPPQKETPVHKPPQKEPPRHKPPQKEPPR. A 4; approximate repeat occupies 49 to 53; that stretch reads TPVHK. The stretch at 54–58 is repeat 5; sequence PPQKE. The 6; approximate repeat unit spans residues 59-63; the sequence is TPVHK. Repeat copies occupy residues 64–68, 69–73, 74–78, 79–83, and 84–88. Positions 82-93 are enriched in basic residues; it reads HKPPHKKSHLHV. Basic and acidic residues predominate over residues 101 to 110; that stretch reads HPTEEHNIHF.

It belongs to the plant proline-rich protein superfamily. ENOD12 family. As to expression, root nodules, stem and flower.

It localises to the secreted. It is found in the cell wall. In terms of biological role, involved in the infection process during the plant-rhizobium interaction. The polypeptide is Early nodulin-12A (ENOD12A) (Pisum sativum (Garden pea)).